A 533-amino-acid chain; its full sequence is Retinoid isomerohydrolase (533 aa).

S2 bears the N-acetylserine mark. C112 carries S-palmitoyl cysteine; in membrane form lipidation. H180 is a Fe cation binding site. Residue C231 is the site of S-palmitoyl cysteine; in membrane form attachment. 2 residues coordinate Fe cation: H241 and H313. Residues C329 and C330 are each lipidated (S-palmitoyl cysteine; in membrane form). H527 is a Fe cation binding site.

This sequence belongs to the carotenoid oxygenase family. Fe(2+) serves as cofactor. In terms of processing, palmitoylation by LRAT regulates ligand binding specificity; the palmitoylated form (membrane form) specifically binds all-trans-retinyl-palmitate, while the soluble unpalmitoylated form binds all-trans-retinol (vitamin A). As to expression, retinal pigment epithelium specific.

It is found in the cell membrane. It carries out the reaction an all-trans-retinyl ester + H2O = 11-cis-retinol + a fatty acid + H(+). The enzyme catalyses lutein = (3R,3'S)-zeaxanthin. It catalyses the reaction all-trans-retinyl hexadecanoate + H2O = 11-cis-retinol + hexadecanoate + H(+). Its function is as follows. Critical isomerohydrolase in the retinoid cycle involved in regeneration of 11-cis-retinal, the chromophore of rod and cone opsins. Catalyzes the cleavage and isomerization of all-trans-retinyl fatty acid esters to 11-cis-retinol which is further oxidized by 11-cis retinol dehydrogenase to 11-cis-retinal for use as visual chromophore. Essential for the production of 11-cis retinal for both rod and cone photoreceptors. Also capable of catalyzing the isomerization of lutein to meso-zeaxanthin an eye-specific carotenoid. The soluble form binds vitamin A (all-trans-retinol), making it available for LRAT processing to all-trans-retinyl ester. The membrane form, palmitoylated by LRAT, binds all-trans-retinyl esters, making them available for IMH (isomerohydrolase) processing to all-cis-retinol. The soluble form is regenerated by transferring its palmitoyl groups onto 11-cis-retinol, a reaction catalyzed by LRAT. This chain is Retinoid isomerohydrolase (RPE65), found in Cynops pyrrhogaster (Japanese fire-bellied newt).